Reading from the N-terminus, the 369-residue chain is Cyanuric acid amidohydrolase (369 aa).

The RU A stretch occupies residues 1-100 (MPRRAEILRL…HWLVIAAREA (100 aa)). Residues arginine 53 and 81–82 (SG) each bind substrate. Positions 106–242 (ALAVGQARTP…HEVVVMGMSP (137 aa)) are RU B. The active site involves lysine 155. Substrate is bound by residues arginine 187 and 225–226 (SA). The active-site Nucleophile is serine 225. Residues 248 to 369 (LVIDHAVMAD…ARRSGAAGPA (122 aa)) are RU C. Glutamate 296 contacts Mg(2+). Substrate-binding positions include arginine 323 and 342–343 (SG). Alanine 345, glutamine 348, glycine 349, proline 350, and glycine 353 together coordinate Mg(2+).

It belongs to the cyclic amide hydrolase (CyAH) family. Homotetramer.

It catalyses the reaction cyanurate + H2O = 1-carboxybiuret + H(+). The protein operates within xenobiotic degradation; atrazine degradation; biuret from cyanurate: step 1/1. Inhibited by barbituric acid. Its function is as follows. Responsible for the hydrolysis of cyanuric acid, an intermediate formed during catabolism of s-triazine based compounds in herbicides such as atrazine and polymers such as melamine. Catalyzes the hydrolytic opening of the s-triazine ring of cyanuric acid (2,4,6-trihydroxy-s-triazine) to yield carbon dioxide and carboxybiuret, which spontaneously decarboxylates to biuret. This is Cyanuric acid amidohydrolase from Methylobacterium sp. (strain 4-46).